Reading from the N-terminus, the 23-residue chain is Acetylcholine receptor subunit gamma (23 aa).

This sequence belongs to the ligand-gated ion channel (TC 1.A.9) family. Acetylcholine receptor (TC 1.A.9.1) subfamily. Gamma/CHRNG sub-subfamily. In terms of assembly, pentamer of two alpha chains, and one each of the beta, delta, and gamma chains.

The protein resides in the postsynaptic cell membrane. It localises to the cell membrane. It catalyses the reaction K(+)(in) = K(+)(out). The enzyme catalyses Na(+)(in) = Na(+)(out). Functionally, after binding acetylcholine, the AChR responds by an extensive change in conformation that affects all subunits and leads to opening of an ion-conducting channel across the plasma membrane. The protein is Acetylcholine receptor subunit gamma (chrng) of Electrophorus electricus (Electric eel).